Reading from the N-terminus, the 25-residue chain is Plasticin-L1 (25 aa).

It belongs to the frog skin active peptide (FSAP) family. Plasticin subfamily. As to expression, expressed by the skin glands.

It is found in the secreted. It localises to the target cell membrane. May play an immunomodulatory role in frog skin in response to microbial pathogens, since it increases the production of the pro-inflammatory cytokines TNF-alpha, IL-1 beta, IL-12, and IL-23 by mouse peritoneal macrophages and has no effect on the production of the anti-inflammatory cytokine IL-10. It is not known whether stimulation of cytokine production arises from a non-specific interaction of the peptide with the macrophage membrane or from interaction with a specific receptor. Shows a low activity in stimulating insulin release from rat BRIN-BD11 beta cells, and acts without loss of integrity of the plasma membrane. Shows a marked affinity for both neutral and anionic membranes models. Does not show antibacterial (E.coli and S.aureus). Does not show hemolytic activity against human erythrocytes. This chain is Plasticin-L1, found in Leptodactylus laticeps (Santa Fe frog).